Here is a 309-residue protein sequence, read N- to C-terminus: Xylose/arabinose import permease protein XacI (309 aa).

6 consecutive transmembrane segments (helical) span residues 29–49, 89–109, 121–141, 170–190, 227–247, and 282–302; these read LVVF…MTAI, LIMS…AAYG, MLML…VPLA, ELVP…TILF, MFGV…LFAF, and AAFL…EQFA. Positions 85-297 constitute an ABC transmembrane type-1 domain; the sequence is FFNSLIMSIP…VPTLILYVAF (213 aa).

The protein belongs to the binding-protein-dependent transport system permease family. The complex is composed of two ATP-binding proteins (XacJ and XacK), two transmembrane proteins (XacH and XacI) and a solute-binding protein (XacG).

It localises to the cell membrane. Its function is as follows. Part of the ABC transporter complex XacGHIJK involved in the uptake of xylose and arabinose. Responsible for the translocation of the substrate across the membrane. This chain is Xylose/arabinose import permease protein XacI, found in Haloferax volcanii (strain ATCC 29605 / DSM 3757 / JCM 8879 / NBRC 14742 / NCIMB 2012 / VKM B-1768 / DS2) (Halobacterium volcanii).